A 985-amino-acid chain; its full sequence is Ephrin type-A receptor 4-B (985 aa).

A signal peptide spans 1–20 (MAGIVHGILFCGLFGLCWAV). Residues 21-547 (TGSRIYPASE…MIGEGTSPTV (527 aa)) are Extracellular-facing. An Eph LBD domain is found at 30 to 209 (EVTLLDSRSV…FYKKCPLTVR (180 aa)). 2 Fibronectin type-III domains span residues 328-438 (PPSA…TNQA) and 439-536 (APST…TVPS). 2 N-linked (GlcNAc...) asparagine glycosylation sites follow: Asn340 and Asn407. A helical membrane pass occupies residues 548–569 (LLVSVAGSIVLVVILIAAFVIS). Over 570–985 (RRRSKYSKAK…QQMQGRMVPV (416 aa)) the chain is Cytoplasmic. 2 positions are modified to phosphotyrosine; by autocatalysis: Tyr595 and Tyr601. A Protein kinase domain is found at 620-881 (IKIEKVIGVG…QIVSMLDKLI (262 aa)). ATP-binding positions include 626-634 (IGVGEFGEV) and Lys652. Asp745 acts as the Proton acceptor in catalysis. Phosphotyrosine; by autocatalysis occurs at positions 778 and 927. In terms of domain architecture, SAM spans 910-974 (SQVASVLDWL…LSSVQGMRTQ (65 aa)). The PDZ-binding motif lies at 983–985 (VPV).

Belongs to the protein kinase superfamily. Tyr protein kinase family. Ephrin receptor subfamily. Localized expression in a subset of neural crest and neural tissues in embryos.

Its subcellular location is the cell membrane. The protein localises to the early endosome. It catalyses the reaction L-tyrosyl-[protein] + ATP = O-phospho-L-tyrosyl-[protein] + ADP + H(+). Its function is as follows. Receptor tyrosine kinase which binds membrane-bound ephrin family ligands residing on adjacent cells, leading to contact-dependent bidirectional signaling into neighboring cells. The signaling pathway downstream of the receptor is referred to as forward signaling while the signaling pathway downstream of the ephrin ligand is referred to as reverse signaling. Highly promiscuous, it has the unique property among Eph receptors to bind and to be physiologically activated by both GPI-anchored ephrin-A and transmembrane ephrin-B ligands including EFNA1 and EFNB3. Upon activation by ephrin ligands, modulates cell morphology and integrin-dependent cell adhesion through regulation of the Rac, Rap and Rho GTPases activity. Plays an important role in the development of the nervous system controlling different steps of axonal guidance including the establishment of the corticospinal projections. The sequence is that of Ephrin type-A receptor 4-B (epha4-b) from Xenopus laevis (African clawed frog).